The primary structure comprises 427 residues: N-myc proto-oncogene protein (427 aa).

Disordered regions lie at residues 45–79 (FELL…SVGL), 144–173 (EKLQ…SGRA), 195–255 (AAEG…STNK), and 297–349 (APSP…RNHN). Pro residues-rich tracts occupy residues 49-61 (PTPP…PAPG) and 152-167 (AAPP…PPVP). Positions 210 to 221 (RASSSSSSSGDD) are enriched in low complexity. Residues 222-242 (TLSDSEDDEDEEEEDEEEEID) are compositionally biased toward acidic residues. Residues Ser-224 and Ser-226 each carry the phosphoserine; by CK2 modification. Positions 343 to 396 (ERRRNHNILERQRANDLRSSFLTLRDHVLSELVQNEKAAKVVILKKATEYVHSL) constitute a bHLH domain. Residues 396 to 417 (LQAEEQKLLLEKEKLQARQEQL) are leucine-zipper.

As to quaternary structure, efficient DNA binding requires dimerization with another bHLH protein. Binds DNA as a heterodimer with MAX.

The protein resides in the nucleus. The protein is N-myc proto-oncogene protein (MYCN) of Serinus canaria (Island canary).